Here is a 190-residue protein sequence, read N- to C-terminus: Dynactin subunit 6 (190 aa).

Threonine 186 is subject to Phosphothreonine.

The protein belongs to the dynactin subunits 5/6 family. Dynactin subunit 6 subfamily. As to quaternary structure, subunit of dynactin, a multiprotein complex part of a tripartite complex with dynein and a adapter, such as BICDL1, BICD2 or HOOK3. The dynactin complex is built around ACTR1A/ACTB filament and consists of an actin-related filament composed of a shoulder domain, a pointed end and a barbed end. Its length is defined by its flexible shoulder domain. The soulder is composed of 2 DCTN1 subunits, 4 DCTN2 and 2 DCTN3. The 4 DCNT2 (via N-terminus) bind the ACTR1A filament and act as molecular rulers to determine the length. The pointed end is important for binding dynein-dynactin cargo adapters. Consists of 4 subunits: ACTR10, DCNT4, DCTN5 and DCTN6. Within the complex DCTN6 forms a heterodimer with DCTN5. The barbed end is composed of a CAPZA1:CAPZB heterodimers, which binds ACTR1A/ACTB filament and dynactin and stabilizes dynactin. Interacts with PLK1. Interacts with N4BP2L1. Phosphorylation at Thr-186 by CDK1 during mitotic prometaphase creates a binding site for PLK1 that facilitates its recruitment to kinetochores.

Its subcellular location is the cytoplasm. The protein localises to the cytoskeleton. It is found in the chromosome. The protein resides in the centromere. It localises to the kinetochore. Part of the dynactin complex that activates the molecular motor dynein for ultra-processive transport along microtubules. The sequence is that of Dynactin subunit 6 (DCTN6) from Sus scrofa (Pig).